The primary structure comprises 130 residues: Small ribosomal subunit protein uS9 (130 aa).

The protein belongs to the universal ribosomal protein uS9 family.

This is Small ribosomal subunit protein uS9 from Hahella chejuensis (strain KCTC 2396).